Reading from the N-terminus, the 265-residue chain is S-acyl fatty acid synthase thioesterase, medium chain (265 aa).

Residue Met1 is modified to N-acetylmethionine. Residues Ser101 and His237 contribute to the active site.

It belongs to the thioesterase family. Interacts (via C-terminus) with FASN. As to expression, detected both in lactating and non-lactating breast epithelium (at protein level). Isoform 2 is up-regulated in bone marrow-derived mononuclear cells of rheumatoid arthritis patients.

The protein localises to the cytoplasm. The protein resides in the cytosol. The enzyme catalyses (9Z)-octadecenoyl-[ACP] + H2O = (9Z)-octadecenoate + holo-[ACP] + H(+). The catalysed reaction is decanoyl-CoA + H2O = decanoate + CoA + H(+). It catalyses the reaction dodecanoyl-CoA + H2O = dodecanoate + CoA + H(+). It carries out the reaction tetradecanoyl-CoA + H2O = tetradecanoate + CoA + H(+). The enzyme catalyses hexadecanoyl-CoA + H2O = hexadecanoate + CoA + H(+). Contributes to the release of free fatty acids from fatty acid synthase (FASN). Has broad substrate specificity, giving rise to a range of free fatty acids with chain lengths between 10 and 16 carbon atoms (C10 - C16). In Homo sapiens (Human), this protein is S-acyl fatty acid synthase thioesterase, medium chain.